Consider the following 304-residue polypeptide: Non-specific ribonucleoside hydrolase RihC (304 aa).

The active site involves H233.

The protein belongs to the IUNH family. RihC subfamily.

Its function is as follows. Hydrolyzes both purine and pyrimidine ribonucleosides with a broad-substrate specificity. This chain is Non-specific ribonucleoside hydrolase RihC, found in Shigella flexneri serotype 5b (strain 8401).